A 369-amino-acid polypeptide reads, in one-letter code: Protein FAM187B (369 aa).

The N-terminal stretch at 1–17 (MPPMLWLLLHFAAPALG) is a signal peptide. Over 18–335 (FYFSISCPSG…RADSVLKGLK (318 aa)) the chain is Extracellular. 3 N-linked (GlcNAc...) asparagine glycosylation sites follow: Asn-45, Asn-68, and Asn-130. The helical transmembrane segment at 336-356 (LVLLVVTVLALLGALLKCIHP) threads the bilayer. At 357-369 (SPGRRSTQVLVVK) the chain is on the cytoplasmic side.

It belongs to the FAM187 family.

It is found in the membrane. The protein is Protein FAM187B (FAM187B) of Homo sapiens (Human).